Here is a 123-residue protein sequence, read N- to C-terminus: Small ribosomal subunit protein uS12 (123 aa).

At Asp-89 the chain carries 3-methylthioaspartic acid.

This sequence belongs to the universal ribosomal protein uS12 family. As to quaternary structure, part of the 30S ribosomal subunit. Contacts proteins S8 and S17. May interact with IF1 in the 30S initiation complex.

Its function is as follows. With S4 and S5 plays an important role in translational accuracy. Functionally, interacts with and stabilizes bases of the 16S rRNA that are involved in tRNA selection in the A site and with the mRNA backbone. Located at the interface of the 30S and 50S subunits, it traverses the body of the 30S subunit contacting proteins on the other side and probably holding the rRNA structure together. The combined cluster of proteins S8, S12 and S17 appears to hold together the shoulder and platform of the 30S subunit. This Rhizobium leguminosarum bv. trifolii (strain WSM2304) protein is Small ribosomal subunit protein uS12.